Reading from the N-terminus, the 212-residue chain is MGTEFNGLFDEWAHTYDSFVQGEDIQYKEVFAHYEDILEDVVNKSFGHVLEFGVGTGNLTNKLLLAGRTVYGIEPSREMRMIAKEKLPKEFSITEGDFLSFEVPNSIDTIVSTYAFHHLTDDEKNVAIAKYSQLLNKGGKIVFADTIFADQDAYDKTVEAAKQRGFHQLANDLQTEYYTRIPVMQTIFENNGFHVTFTRLNHFVWVMEATKQ.

3 residues coordinate S-adenosyl-L-methionine: Gly-53, Glu-74, and Asp-97.

The protein belongs to the methyltransferase superfamily. YrrT family.

In terms of biological role, could be a S-adenosyl-L-methionine-dependent methyltransferase. This is an uncharacterized protein from Bacillus thuringiensis (strain Al Hakam).